The chain runs to 127 residues: Fumarate reductase subunit C (127 aa).

The next 3 membrane-spanning stretches (helical) occupy residues 30–50 (ATVL…GSLV), 58–78 (GWLS…ALLG), and 107–127 (IIVL…LMVV).

Belongs to the FrdC family. As to quaternary structure, part of an enzyme complex containing four subunits: a flavoprotein (FrdA), an iron-sulfur protein (FrdB), and two hydrophobic anchor proteins (FrdC and FrdD).

It localises to the cell inner membrane. Its function is as follows. Anchors the catalytic components of the fumarate reductase complex to the cell membrane, binds quinones. The protein is Fumarate reductase subunit C of Vibrio atlanticus (strain LGP32) (Vibrio splendidus (strain Mel32)).